The following is a 431-amino-acid chain: Glucose-1-phosphate adenylyltransferase (431 aa).

Residue Lys39 participates in beta-D-fructose 1,6-bisphosphate binding. The AMP site is built by Arg40, His46, and Arg52. Residue Tyr114 participates in alpha-D-glucose 1-phosphate binding. Residue Arg130 coordinates AMP. Residues Gly179, Glu194–Lys195, and Ser212 contribute to the alpha-D-glucose 1-phosphate site. Residue Arg386 coordinates AMP. Gln429–Arg431 provides a ligand contact to beta-D-fructose 1,6-bisphosphate.

This sequence belongs to the bacterial/plant glucose-1-phosphate adenylyltransferase family. Homotetramer.

The enzyme catalyses alpha-D-glucose 1-phosphate + ATP + H(+) = ADP-alpha-D-glucose + diphosphate. Its pathway is glycan biosynthesis; glycogen biosynthesis. With respect to regulation, allosterically activated by fructose-1,6-bisphosphate (F16BP) and inhibited by AMP. Involved in the biosynthesis of ADP-glucose, a building block required for the elongation reactions to produce glycogen. Catalyzes the reaction between ATP and alpha-D-glucose 1-phosphate (G1P) to produce pyrophosphate and ADP-Glc. The sequence is that of Glucose-1-phosphate adenylyltransferase from Klebsiella pneumoniae (strain 342).